The sequence spans 520 residues: Cytochrome P450 716A67 (520 aa).

A helical membrane pass occupies residues Ser-4–Trp-24. Residue Cys-466 coordinates heme.

It belongs to the cytochrome P450 family. Heme serves as cofactor.

The protein localises to the membrane. In terms of biological role, catalyzes hydroxylation at the C-2 position of different intermediates of the hemolytic sapogenin biosynthetic pathway downstream of oleanolic acid synthesis. The chain is Cytochrome P450 716A67 from Medicago truncatula (Barrel medic).